Here is a 529-residue protein sequence, read N- to C-terminus: Peptide chain release factor 3 (529 aa).

The tr-type G domain maps to 11–280 (SKRRTFAIIS…GLVAWAPAPM (270 aa)). GTP-binding positions include 20–27 (SHPDAGKT), 88–92 (DTPGH), and 142–145 (NKLD).

The protein belongs to the TRAFAC class translation factor GTPase superfamily. Classic translation factor GTPase family. PrfC subfamily.

It is found in the cytoplasm. Increases the formation of ribosomal termination complexes and stimulates activities of RF-1 and RF-2. It binds guanine nucleotides and has strong preference for UGA stop codons. It may interact directly with the ribosome. The stimulation of RF-1 and RF-2 is significantly reduced by GTP and GDP, but not by GMP. The chain is Peptide chain release factor 3 from Pectobacterium carotovorum subsp. carotovorum (strain PC1).